Reading from the N-terminus, the 348-residue chain is NADH-ubiquinone oxidoreductase chain 2 (348 aa).

Helical transmembrane passes span 3-23, 25-45, 59-79, 93-115, 149-169, 178-198, 201-221, 239-259, 276-296, and 326-346; these read PIII…VLMS, HWFM…PVLM, YFLT…INLI, TAST…HFWV, LNMT…GWGG, ILAF…MFNP, TLLN…ILIF, IMTV…PLSG, IALA…YMRL, and LPTL…MMML.

The protein belongs to the complex I subunit 2 family. Core subunit of respiratory chain NADH dehydrogenase (Complex I) which is composed of 45 different subunits. Interacts with TMEM242.

It localises to the mitochondrion inner membrane. It catalyses the reaction a ubiquinone + NADH + 5 H(+)(in) = a ubiquinol + NAD(+) + 4 H(+)(out). Functionally, core subunit of the mitochondrial membrane respiratory chain NADH dehydrogenase (Complex I) which catalyzes electron transfer from NADH through the respiratory chain, using ubiquinone as an electron acceptor. Essential for the catalytic activity and assembly of complex I. The polypeptide is NADH-ubiquinone oxidoreductase chain 2 (Thyroptera tricolor (Spix's disk-winged bat)).